A 430-amino-acid chain; its full sequence is Elongation factor 1-alpha (430 aa).

Residues 7–219 form the tr-type G domain; that stretch reads KPHVNIVFIG…DQIPEPEKPV (213 aa). The tract at residues 16–23 is G1; the sequence is GHVDHGKS. GTP is bound at residue 16–23; it reads GHVDHGKS. Ser-23 is a Mg(2+) binding site. The segment at 70–74 is G2; sequence GITID. The interval 91–94 is G3; it reads DAPG. GTP contacts are provided by residues 91 to 95 and 146 to 149; these read DAPGH and NKMD. The tract at residues 146 to 149 is G4; that stretch reads NKMD. Residues 183 to 185 form a G5 region; that stretch reads SAW.

The protein belongs to the TRAFAC class translation factor GTPase superfamily. Classic translation factor GTPase family. EF-Tu/EF-1A subfamily.

It localises to the cytoplasm. The enzyme catalyses GTP + H2O = GDP + phosphate + H(+). In terms of biological role, GTP hydrolase that promotes the GTP-dependent binding of aminoacyl-tRNA to the A-site of ribosomes during protein biosynthesis. This Pyrococcus woesei protein is Elongation factor 1-alpha.